A 136-amino-acid chain; its full sequence is Acyl carrier protein 2, chloroplastic (136 aa).

The transit peptide at 1–51 (MASIAASASISLQARPRQLAIAASQVKSFSNGRRSSLSFNLRQLPTRLTVS) directs the protein to the chloroplast. Positions 56–131 (PETVDKVCAV…QAAALIEELL (76 aa)) constitute a Carrier domain. Residue Ser-91 is modified to O-(pantetheine 4'-phosphoryl)serine.

This sequence belongs to the acyl carrier protein (ACP) family. 4'-phosphopantetheine is transferred from CoA to a specific serine of apo-ACP by acpS. This modification is essential for activity because fatty acids are bound in thioester linkage to the sulfhydryl of the prosthetic group.

Its subcellular location is the plastid. The protein resides in the chloroplast. Carrier of the growing fatty acid chain in fatty acid biosynthesis. The chain is Acyl carrier protein 2, chloroplastic (ACP2) from Arabidopsis thaliana (Mouse-ear cress).